Consider the following 178-residue polypeptide: Large ribosomal subunit protein uL6 (178 aa).

This sequence belongs to the universal ribosomal protein uL6 family. In terms of assembly, part of the 50S ribosomal subunit.

Its function is as follows. This protein binds to the 23S rRNA, and is important in its secondary structure. It is located near the subunit interface in the base of the L7/L12 stalk, and near the tRNA binding site of the peptidyltransferase center. In Staphylococcus carnosus (strain TM300), this protein is Large ribosomal subunit protein uL6.